We begin with the raw amino-acid sequence, 219 residues long: MKVILLGPPGAGKGTQAAGICERFDIPQISTGDMLRAAVKAGTPLGQQAKKVMDAGELVSDDIIMGLVKERIAEPDCANGFLFDGFPRTIAQAEGLKAEGINVDAVVEIQVPDEDIVQRMAGRRVHPGSGRVYHVEHNPPKEEGKDDVTGEPLVQRDDDQEETVRKRLGVYHEQTQPLVEYYSDWAAKGGDGAPRYIVIKGVGSVDDIRNRILSELERA.

10–15 (GAGKGT) lines the ATP pocket. An NMP region spans residues 30 to 59 (STGDMLRAAVKAGTPLGQQAKKVMDAGELV). AMP-binding positions include T31, R36, 57-59 (ELV), 85-88 (GFPR), and Q92. The segment at 122–159 (GRRVHPGSGRVYHVEHNPPKEEGKDDVTGEPLVQRDDD) is LID. ATP is bound by residues R123 and 132 to 133 (VY). The segment at 129–152 (SGRVYHVEHNPPKEEGKDDVTGEP) is disordered. A compositionally biased stretch (basic and acidic residues) spans 133–152 (YHVEHNPPKEEGKDDVTGEP). The AMP site is built by R156 and R167. Residue G203 coordinates ATP.

It belongs to the adenylate kinase family. In terms of assembly, monomer.

It is found in the cytoplasm. It catalyses the reaction AMP + ATP = 2 ADP. It participates in purine metabolism; AMP biosynthesis via salvage pathway; AMP from ADP: step 1/1. Functionally, catalyzes the reversible transfer of the terminal phosphate group between ATP and AMP. Plays an important role in cellular energy homeostasis and in adenine nucleotide metabolism. This Alkalilimnicola ehrlichii (strain ATCC BAA-1101 / DSM 17681 / MLHE-1) protein is Adenylate kinase.